The chain runs to 194 residues: Small ribosomal subunit protein uS5 (194 aa).

The S5 DRBM domain occupies 26 to 89 (LEEKVVEIRR…ADAKKRIIKV (64 aa)).

It belongs to the universal ribosomal protein uS5 family. Part of the 30S ribosomal subunit. Contacts proteins S4 and S8.

With S4 and S12 plays an important role in translational accuracy. In terms of biological role, located at the back of the 30S subunit body where it stabilizes the conformation of the head with respect to the body. This chain is Small ribosomal subunit protein uS5, found in Sulfurihydrogenibium sp. (strain YO3AOP1).